A 251-amino-acid polypeptide reads, in one-letter code: 1-(5-phosphoribosyl)-5-[(5-phosphoribosylamino)methylideneamino] imidazole-4-carboxamide isomerase (251 aa).

Aspartate 8 serves as the catalytic Proton acceptor. Aspartate 131 functions as the Proton donor in the catalytic mechanism.

It belongs to the HisA/HisF family.

It is found in the cytoplasm. The catalysed reaction is 1-(5-phospho-beta-D-ribosyl)-5-[(5-phospho-beta-D-ribosylamino)methylideneamino]imidazole-4-carboxamide = 5-[(5-phospho-1-deoxy-D-ribulos-1-ylimino)methylamino]-1-(5-phospho-beta-D-ribosyl)imidazole-4-carboxamide. It functions in the pathway amino-acid biosynthesis; L-histidine biosynthesis; L-histidine from 5-phospho-alpha-D-ribose 1-diphosphate: step 4/9. This chain is 1-(5-phosphoribosyl)-5-[(5-phosphoribosylamino)methylideneamino] imidazole-4-carboxamide isomerase, found in Azoarcus sp. (strain BH72).